The sequence spans 122 residues: S-adenosylmethionine decarboxylase proenzyme (122 aa).

The active-site Schiff-base intermediate with substrate; via pyruvic acid is the S63. S63 carries the post-translational modification Pyruvic acid (Ser); by autocatalysis. H68 (proton acceptor; for processing activity) is an active-site residue. Catalysis depends on C83, which acts as the Proton donor; for catalytic activity.

Belongs to the prokaryotic AdoMetDC family. Type 1 subfamily. In terms of assembly, heterotetramer of two alpha and two beta chains arranged as a dimer of alpha/beta heterodimers. Requires pyruvate as cofactor. In terms of processing, is synthesized initially as an inactive proenzyme. Formation of the active enzyme involves a self-maturation process in which the active site pyruvoyl group is generated from an internal serine residue via an autocatalytic post-translational modification. Two non-identical subunits are generated from the proenzyme in this reaction, and the pyruvate is formed at the N-terminus of the alpha chain, which is derived from the carboxyl end of the proenzyme. The post-translation cleavage follows an unusual pathway, termed non-hydrolytic serinolysis, in which the side chain hydroxyl group of the serine supplies its oxygen atom to form the C-terminus of the beta chain, while the remainder of the serine residue undergoes an oxidative deamination to produce ammonia and the pyruvoyl group blocking the N-terminus of the alpha chain.

The enzyme catalyses S-adenosyl-L-methionine + H(+) = S-adenosyl 3-(methylsulfanyl)propylamine + CO2. It participates in amine and polyamine biosynthesis; S-adenosylmethioninamine biosynthesis; S-adenosylmethioninamine from S-adenosyl-L-methionine: step 1/1. Its function is as follows. Catalyzes the decarboxylation of S-adenosylmethionine to S-adenosylmethioninamine (dcAdoMet), the propylamine donor required for the synthesis of the polyamines spermine and spermidine from the diamine putrescine. The sequence is that of S-adenosylmethionine decarboxylase proenzyme from Methanococcus maripaludis (strain C5 / ATCC BAA-1333).